A 148-amino-acid chain; its full sequence is Small ribosomal subunit protein uS7m (148 aa).

Belongs to the universal ribosomal protein uS7 family. Part of the small ribosomal subunit.

Its subcellular location is the mitochondrion. Functionally, one of the primary rRNA binding proteins, it binds directly to 18S rRNA where it nucleates assembly of the head domain of the small subunit. The sequence is that of Small ribosomal subunit protein uS7m (RPS7) from Arabidopsis thaliana (Mouse-ear cress).